A 131-amino-acid polypeptide reads, in one-letter code: Insertion element IS1 protein InsB (131 aa).

Belongs to the transposase 27 family.

Functionally, absolutely required for transposition of IS1. The polypeptide is Insertion element IS1 protein InsB (insB) (Shigella sonnei).